Here is a 341-residue protein sequence, read N- to C-terminus: MDIGILSSLKPAQSFRDNSLGSFINSIDYSDSGEYVATTCSADDTVQIYDALDPKQVHTITCFETGIEVARFTHHDHNLLLSTTKGNKDIQYVSIYDNKRISYFSGHTDIVSSIEVSPIEDQFVSTANDKTLKLWKMNQSSRCLGNLDLPSLGIPAYDPTGLVFAVACHSLSRIFLYDVRNYGSDPFSTFTIDDSRYLSRFSFPPMMPEWKHMEFSNDGKCILLSTRANVHYILDAFSGDVLSRLEDFQELPFSNNFHGGSTTFVPQGNFVIGSADDRTLNVWNLRHTFHHKGKTRPPEHRIVSQSIINPGLVKYNPRYDQLLTAGSQLVFWLPEKYALTS.

4 WD repeats span residues 19-59 (SLGS…QVHT), 106-145 (GHTD…RCLG), 252-293 (PFSN…HHKG), and 303-341 (VSQS…ALTS).

It is found in the cytoplasm. The protein localises to the nucleus. This is an uncharacterized protein from Schizosaccharomyces pombe (strain 972 / ATCC 24843) (Fission yeast).